A 367-amino-acid chain; its full sequence is tRNA-specific 2-thiouridylase MnmA (367 aa).

ATP contacts are provided by residues 11–18 (GLSGGVDS) and Leu-37. Cys-99 serves as the catalytic Nucleophile. A disulfide bond links Cys-99 and Cys-195. Residue Gly-123 coordinates ATP. The tract at residues 145-147 (KDQ) is interaction with tRNA. Catalysis depends on Cys-195, which acts as the Cysteine persulfide intermediate. Residues 304–305 (RY) are interaction with tRNA.

This sequence belongs to the MnmA/TRMU family.

It is found in the cytoplasm. It catalyses the reaction S-sulfanyl-L-cysteinyl-[protein] + uridine(34) in tRNA + AH2 + ATP = 2-thiouridine(34) in tRNA + L-cysteinyl-[protein] + A + AMP + diphosphate + H(+). Catalyzes the 2-thiolation of uridine at the wobble position (U34) of tRNA, leading to the formation of s(2)U34. This Chlorobium luteolum (strain DSM 273 / BCRC 81028 / 2530) (Pelodictyon luteolum) protein is tRNA-specific 2-thiouridylase MnmA.